Consider the following 548-residue polypeptide: T-complex protein 1 subunit theta (548 aa).

Residues 528–548 are disordered; it reads ATGGPKPRGPKQQDEDDDGMA.

Belongs to the TCP-1 chaperonin family. As to quaternary structure, heterooligomeric complex.

Its subcellular location is the cytoplasm. In terms of biological role, molecular chaperone; assists the folding of proteins upon ATP hydrolysis. Known to play a role, in vitro, in the folding of actin and tubulin. Required for correct subcellular localization of pgl-1. The protein is T-complex protein 1 subunit theta of Caenorhabditis briggsae.